The sequence spans 263 residues: L-erythrulose-1-phosphate isomerase (263 aa).

Histidine 106 serves as the catalytic Electrophile. Glutamate 178 functions as the Proton acceptor in the catalytic mechanism.

This sequence belongs to the triosephosphate isomerase family.

The enzyme catalyses L-erythrulose 1-phosphate = D-erythrulose 4-phosphate. The protein operates within carbohydrate metabolism; L-threitol degradation. Its function is as follows. Catalyzes the isomerization of L-erythrulose-1P to D-erythrulose-4P. Involved in the degradation pathway of L-threitol, that allows M.smegmatis to grow on this compound as the sole carbon source. This is L-erythrulose-1-phosphate isomerase from Mycolicibacterium smegmatis (strain ATCC 700084 / mc(2)155) (Mycobacterium smegmatis).